We begin with the raw amino-acid sequence, 135 residues long: Interleukin-4 (135 aa).

An N-terminal signal peptide occupies residues 1 to 24 (MGLTYQLIPVLVCLLVCTSHLVHG). 3 disulfide bridges follow: Cys-27–Cys-135, Cys-48–Cys-85, and Cys-70–Cys-105. Asn-62 is a glycosylation site (N-linked (GlcNAc...) asparagine).

Belongs to the IL-4/IL-13 family.

It is found in the secreted. Functionally, participates in at least several B-cell activation processes as well as of other cell types. It is a costimulator of DNA-synthesis. It induces the expression of class II MHC molecules on resting B-cells. It enhances both secretion and cell surface expression of IgE and IgG1. It also regulates the expression of the low affinity Fc receptor for IgE (CD23) on both lymphocytes and monocytes. Positively regulates IL31RA expression in macrophages. Stimulates autophagy in dendritic cells by interfering with mTORC1 signaling and through the induction of RUFY4. This is Interleukin-4 (IL4) from Bubalus bubalis (Domestic water buffalo).